The primary structure comprises 318 residues: MSTNSIKLLAGNSHPGLAELISQRLGVPLSKVGVYQYSNKETSVTIGESIRDEDVYIIQTGYGEHEINDFLMELLILIHACKTASVRRITAVIPNFPYARQDKKDKSRAPITAKLIANLLETAGCDHVITMDLHASQIQGFFHIPVDNLYGEPSVLNYIRTKTDFNNAILVSPDAGGAKRVASLADKLDMNFALIHKERQKANEVSRMLLVGDVAGKSCLLIDDMADTCGTLVKACDTLMDHGAKEVIAIVTHGIFSGSAREKLINSRLSRIVCTNTVPVDLDLDIVDQVDISPTIAEAIRRLHNGESVSYLFTHAPV.

Mg(2+) is bound by residues aspartate 132, histidine 134, histidine 143, and aspartate 147.

It belongs to the ribose-phosphate pyrophosphokinase family.

It localises to the cytoplasm. It catalyses the reaction D-ribose 5-phosphate + ATP = 5-phospho-alpha-D-ribose 1-diphosphate + AMP + H(+). It functions in the pathway metabolic intermediate biosynthesis; 5-phospho-alpha-D-ribose 1-diphosphate biosynthesis; 5-phospho-alpha-D-ribose 1-diphosphate from D-ribose 5-phosphate (route I): step 1/1. Functionally, 5-phosphoribose 1-diphosphate synthase involved in nucleotide, histidine, and tryptophan biosynthesis. Active in heteromultimeric complexes with other 5-phosphoribose 1-diphosphate synthases (PRS2, PRS3, PRS4 and PRS5). This chain is Ribose-phosphate pyrophosphokinase 2 (PRS2), found in Saccharomyces cerevisiae (strain ATCC 204508 / S288c) (Baker's yeast).